The primary structure comprises 274 residues: UPF0758 protein RHECIAT_CH0001935 (274 aa).

The disordered stretch occupies residues 1 to 57; it reads MAKRPAATSSNDELPFATEEPVADERSFFGGRPQNPTAPNARAALPASLSGPEHYHG. The region spanning 152-274 is the MPN domain; the sequence is VLSSWSSVIQ…HVSLKGLKLI (123 aa). Residues His-223, His-225, and Asp-236 each contribute to the Zn(2+) site. A JAMM motif motif is present at residues 223–236; it reads HNHPSGDPTPSRAD.

Belongs to the UPF0758 family.

The chain is UPF0758 protein RHECIAT_CH0001935 from Rhizobium etli (strain CIAT 652).